The primary structure comprises 2319 residues: AT-rich interactive domain-containing protein 1B (2319 aa).

Composition is skewed to low complexity over residues 1–21 and 43–56; these read MAAR…ARAG and GARG…APGP. Disordered stretches follow at residues 1 to 74, 155 to 306, 321 to 414, 487 to 546, 577 to 1062, and 1085 to 1129; these read MAAR…VHHH, VGEA…GGGG, APAS…GAGA, RFAG…AGAA, QQRS…LMNT, and DMMS…KITK. Position 2 is an N-acetylalanine (Ala-2). The span at 57–68 shows a compositional bias: gly residues; sequence MLGGGGDGGGGL. Residues 165–188 are compositionally biased toward basic residues; that stretch reads QQHHHHHHAHHHHHHAHHLHHHHA. Composition is skewed to low complexity over residues 189–215 and 343–363; these read LQQQ…QQQH and SPGM…PGSM. Residues 365–379 are compositionally biased toward polar residues; that stretch reads PLQNSHEGYPNSQCN. Positions 388–414 are enriched in gly residues; sequence GAGGGGGGGGGGGGGSGGGGGGGGAGA. Arg-487 carries the asymmetric dimethylarginine modification. Over residues 489–510 the composition is skewed to polar residues; the sequence is AGQNQHPSGATPTLNQLLTSPS. The LXXLL signature appears at 502–506; it reads LNQLL. Low complexity predominate over residues 536–546; that stretch reads PQSQAAAAGAA. 2 positions are modified to phosphoserine: Ser-585 and Ser-599. Arg-608 is modified (asymmetric dimethylarginine). Residues 620–630 show a composition bias toward low complexity; it reads SQPQQSSPYPG. Arg-640 bears the Asymmetric dimethylarginine mark. 6 stretches are compositionally biased toward low complexity: residues 651-670, 677-687, 695-712, 767-783, 811-832, and 840-849; these read GAMA…YGQQ, QQGQQPYYSQQ, PQAQ…QPQQ, SSAV…GDQS, GSPV…IPGS, and GSQSESSSHP. A compositionally biased stretch (polar residues) spans 866-880; it reads TQRNPQMAQYGPQQT. Over residues 881–892 the composition is skewed to low complexity; the sequence is GPSMSPHPSPGG. 2 stretches are compositionally biased toward polar residues: residues 899–923 and 947–958; these read SSFQ…QGNY and SANNQMHGQGPS. 2 stretches are compositionally biased toward low complexity: residues 980–994 and 1014–1028; these read PGNM…PGMS and EAAA…NSAQ. Residues 1029–1062 are compositionally biased toward polar residues; that stretch reads SRQGSFPGMNQSGLMASSSPYSQPMNNSSSLMNT. The 92-residue stretch at 1136-1227 folds into the ARID domain; the sequence is EPERKLWVDR…YLFAFECKIE (92 aa). Disordered stretches follow at residues 1230 to 1334, 1346 to 1443, 1475 to 1647, and 1782 to 1852; these read EEPP…QQGM, EPNK…PNYK, NQYG…FLPS, and DHNA…KQAS. Composition is skewed to polar residues over residues 1254–1273 and 1287–1304; these read ANSG…SNSM and STPH…SSTI. Over residues 1305 to 1319 the composition is skewed to low complexity; it reads SVHDPFSDVSDSSFP. Composition is skewed to polar residues over residues 1320–1334 and 1364–1388; these read KRNS…QQGM and PFMT…SGAM. The span at 1426 to 1440 shows a compositional bias: low complexity; sequence PPYGGHQPGLYPQQP. The short motif at 1441 to 1460 is the Nuclear localization signal element; the sequence is NYKRHMDGMYGPPAKRHEGD. Polar residues-rich tracts occupy residues 1522-1534 and 1579-1601; these read LQSS…QQNM and ESQW…SMQP. Ser-1625, Ser-1638, and Ser-1642 each carry phosphoserine. Residues 1627–1641 show a composition bias toward polar residues; that stretch reads ASFQRSLENRMSPSK. Positions 1782–1791 are enriched in basic and acidic residues; that stretch reads DHNAARKDDS. Ser-1798 is modified (phosphoserine). The segment covering 1799-1823 has biased composition (acidic residues); it reads GKEEEDAECIDDDEEDEEDEEEDSE. Residues 1842–1852 are compositionally biased toward basic and acidic residues; that stretch reads ADPKEKPKQAS. Lys-1860 bears the N6-acetyllysine mark. Disordered regions lie at residues 1904 to 1941 and 1954 to 1973; these read FESK…QQEK and RPGA…SSKF. Over residues 1925–1940 the composition is skewed to basic and acidic residues; sequence RKKEQEGKGDSEEQQE. The LXXLL signature appears at 2119–2123; the sequence is LDGLL.

In terms of assembly, component of SWI/SNF chromatin remodeling complexes, in some of which it can be mutually exclusive with ARID1B/BAF250B. The canonical complex contains a catalytic subunit (either SMARCA4/BRG1/BAF190A or SMARCA2/BRM/BAF190B) and at least SMARCE1, ACTL6A/BAF53, SMARCC1/BAF155, SMARCC2/BAF170, and SMARCB1/SNF5/BAF47. Other subunits specific to each of the complexes may also be present permitting several possible combinations developmentally and tissue specific. Component of the BAF (SWI/SNF-A) complex, which includes at least actin (ACTB), ARID1A/BAF250A, ARID1B/BAF250B, SMARCA2/BRM, SMARCA4/BRG1/BAF190A, ACTL6A/BAF53, ACTL6B/BAF53B, SMARCE1/BAF57, SMARCC1/BAF155, SMARCC2/BAF170, SMARCB1/SNF5/INI1, and one or more SMARCD1/BAF60A, SMARCD2/BAF60B, or SMARCD3/BAF60C. In muscle cells, the BAF complex also contains DPF3. Component of neural progenitors-specific chromatin remodeling complex (npBAF complex) composed of at least, ARID1A/BAF250A or ARID1B/BAF250B, SMARCD1/BAF60A, SMARCD3/BAF60C, SMARCA2/BRM/BAF190B, SMARCA4/BRG1/BAF190A, SMARCB1/BAF47, SMARCC1/BAF155, SMARCE1/BAF57, SMARCC2/BAF170, PHF10/BAF45A, ACTL6A/BAF53A and actin. Component of neuron-specific chromatin remodeling complex (nBAF complex) composed of at least, ARID1A/BAF250A or ARID1B/BAF250B, SMARCD1/BAF60A, SMARCD3/BAF60C, SMARCA2/BRM/BAF190B, SMARCA4/BRG1/BAF190A, SMARCB1/BAF47, SMARCC1/BAF155, SMARCE1/BAF57, SMARCC2/BAF170, DPF1/BAF45B, DPF3/BAF45C, ACTL6B/BAF53B and actin. Component of a SWI/SNF-like EBAFb complex, at least composed of SMARCA4/BRG1/BAF190A, SMARCB1/BAF47/SNF5, ACTL6A/BAF53A, SMARCE1/BAF57, SMARCD1/BAF60A, SMARCD2/BAF60B, SMARCC1/BAF155, SMARCC2/BAF170, ARID1B/BAF250B, MLLT1/ENL and actin. Interacts through its C-terminus with SMARCA2/BRM/BAF190B and SMARCA4/BRG1/BAF190A. Interacts with SMARCC1/BAF155. Widely expressed with high levels in heart, skeletal muscle and kidney.

The protein localises to the nucleus. Functionally, involved in transcriptional activation and repression of select genes by chromatin remodeling (alteration of DNA-nucleosome topology). Component of SWI/SNF chromatin remodeling complexes that carry out key enzymatic activities, changing chromatin structure by altering DNA-histone contacts within a nucleosome in an ATP-dependent manner. Belongs to the neural progenitors-specific chromatin remodeling complex (npBAF complex) and the neuron-specific chromatin remodeling complex (nBAF complex). During neural development a switch from a stem/progenitor to a postmitotic chromatin remodeling mechanism occurs as neurons exit the cell cycle and become committed to their adult state. The transition from proliferating neural stem/progenitor cells to postmitotic neurons requires a switch in subunit composition of the npBAF and nBAF complexes. As neural progenitors exit mitosis and differentiate into neurons, npBAF complexes which contain ACTL6A/BAF53A and PHF10/BAF45A, are exchanged for homologous alternative ACTL6B/BAF53B and DPF1/BAF45B or DPF3/BAF45C subunits in neuron-specific complexes (nBAF). The npBAF complex is essential for the self-renewal/proliferative capacity of the multipotent neural stem cells. The nBAF complex along with CREST plays a role regulating the activity of genes essential for dendrite growth. Binds DNA non-specifically. This is AT-rich interactive domain-containing protein 1B from Homo sapiens (Human).